Consider the following 163-residue polypeptide: 3-hydroxyacyl-[acyl-carrier-protein] dehydratase FabZ (163 aa).

The active site involves His-58.

The protein belongs to the thioester dehydratase family. FabZ subfamily.

The protein localises to the cytoplasm. It carries out the reaction a (3R)-hydroxyacyl-[ACP] = a (2E)-enoyl-[ACP] + H2O. Involved in unsaturated fatty acids biosynthesis. Catalyzes the dehydration of short chain beta-hydroxyacyl-ACPs and long chain saturated and unsaturated beta-hydroxyacyl-ACPs. This chain is 3-hydroxyacyl-[acyl-carrier-protein] dehydratase FabZ, found in Francisella tularensis subsp. tularensis (strain FSC 198).